Here is a 243-residue protein sequence, read N- to C-terminus: Large ribosomal subunit protein uL2 (243 aa).

Disordered stretches follow at residues 1–23 and 204–243; these read MGKR…PSHR and PFGG…GGRR. Over residues 228 to 243 the composition is skewed to basic residues; it reads KVGHIAARKTGRGGRR.

It belongs to the universal ribosomal protein uL2 family. As to quaternary structure, part of the 50S ribosomal subunit. Forms a bridge to the 30S subunit in the 70S ribosome.

Functionally, one of the primary rRNA binding proteins. Required for association of the 30S and 50S subunits to form the 70S ribosome, for tRNA binding and peptide bond formation. It has been suggested to have peptidyltransferase activity; this is somewhat controversial. Makes several contacts with the 16S rRNA in the 70S ribosome. This is Large ribosomal subunit protein uL2 from Methanopyrus kandleri (strain AV19 / DSM 6324 / JCM 9639 / NBRC 100938).